The sequence spans 241 residues: Small ribosomal subunit protein uS3 (241 aa).

One can recognise a KH type-2 domain in the interval 39-107 (MRKFVMDELK…ETHLNIVEVR (69 aa)). The interval 214 to 241 (ASERRALEGDAQGPASRDRDRDRRRDNA) is disordered. The span at 229–241 (SRDRDRDRRRDNA) shows a compositional bias: basic and acidic residues.

It belongs to the universal ribosomal protein uS3 family. In terms of assembly, part of the 30S ribosomal subunit. Forms a tight complex with proteins S10 and S14.

Its function is as follows. Binds the lower part of the 30S subunit head. Binds mRNA in the 70S ribosome, positioning it for translation. The sequence is that of Small ribosomal subunit protein uS3 from Rhizobium rhizogenes (strain K84 / ATCC BAA-868) (Agrobacterium radiobacter).